A 309-amino-acid polypeptide reads, in one-letter code: 2-phospho-L-lactate transferase (309 aa).

The 7,8-didemethyl-8-hydroxy-5-deazariboflavin site is built by Asp-48 and Lys-87.

It belongs to the CofD family. Homodimer. Requires Mg(2+) as cofactor.

The catalysed reaction is (2S)-lactyl-2-diphospho-5'-guanosine + 7,8-didemethyl-8-hydroxy-5-deazariboflavin = oxidized coenzyme F420-0 + GMP + H(+). The protein operates within cofactor biosynthesis; coenzyme F420 biosynthesis. In terms of biological role, catalyzes the transfer of the 2-phospholactate moiety from (2S)-lactyl-2-diphospho-5'-guanosine to 7,8-didemethyl-8-hydroxy-5-deazariboflavin (FO) with the formation of oxidized coenzyme F420-0 and GMP. This chain is 2-phospho-L-lactate transferase, found in Methanosarcina barkeri (strain Fusaro / DSM 804).